A 78-amino-acid polypeptide reads, in one-letter code: MAKFATQLFLLTASVVMLEVQSSIVIMQDPDLGRKLIMNPANGASCGETCFTGICFTAGCSCNPWPTCTRNGLNPESI.

A signal peptide spans 1 to 23; the sequence is MAKFATQLFLLTASVVMLEVQSS. Residues 24-42 constitute a propeptide, removed in mature form; the sequence is IVIMQDPDLGRKLIMNPAN. Residues 43-71 constitute a cross-link (cyclopeptide (Gly-Asn)); the sequence is GASCGETCFTGICFTAGCSCNPWPTCTRN. Intrachain disulfides connect C46/C60, C50/C62, and C55/C68. Residues 72-78 constitute a propeptide, removed in mature form; that stretch reads GLNPESI.

This is a cyclic peptide.

In terms of biological role, probably participates in a plant defense mechanism. In Chassalia chartacea (Chassalia curviflora), this protein is Chassatide C4.